The following is a 197-amino-acid chain: HTH-type transcriptional regulator BetI (197 aa).

Residues 8–68 (PIRRQQLIQA…ATMRHLMNAL (61 aa)) enclose the HTH tetR-type domain. A DNA-binding region (H-T-H motif) is located at residues 31-50 (SIALIARLAGVSNGIISHYF).

It functions in the pathway amine and polyamine biosynthesis; betaine biosynthesis via choline pathway [regulation]. Repressor involved in the biosynthesis of the osmoprotectant glycine betaine. It represses transcription of the choline transporter BetT and the genes of BetAB involved in the synthesis of glycine betaine. This chain is HTH-type transcriptional regulator BetI, found in Pseudomonas syringae pv. tomato (strain ATCC BAA-871 / DC3000).